A 94-amino-acid chain; its full sequence is Co-chaperonin GroES (94 aa).

It belongs to the GroES chaperonin family. In terms of assembly, heptamer of 7 subunits arranged in a ring. Interacts with the chaperonin GroEL.

It localises to the cytoplasm. Together with the chaperonin GroEL, plays an essential role in assisting protein folding. The GroEL-GroES system forms a nano-cage that allows encapsulation of the non-native substrate proteins and provides a physical environment optimized to promote and accelerate protein folding. GroES binds to the apical surface of the GroEL ring, thereby capping the opening of the GroEL channel. This chain is Co-chaperonin GroES, found in Streptococcus oralis.